The following is a 309-amino-acid chain: Ribose-phosphate pyrophosphokinase (309 aa).

Residues 37–39 (DGE) and 96–97 (RQ) contribute to the ATP site. Positions 130 and 169 each coordinate Mg(2+). Lys-192 is a catalytic residue. Residues Arg-194, Asp-218, and 222–226 (DTAGT) each bind D-ribose 5-phosphate.

Belongs to the ribose-phosphate pyrophosphokinase family. Class I subfamily. In terms of assembly, homohexamer. It depends on Mg(2+) as a cofactor.

It is found in the cytoplasm. It catalyses the reaction D-ribose 5-phosphate + ATP = 5-phospho-alpha-D-ribose 1-diphosphate + AMP + H(+). Its pathway is metabolic intermediate biosynthesis; 5-phospho-alpha-D-ribose 1-diphosphate biosynthesis; 5-phospho-alpha-D-ribose 1-diphosphate from D-ribose 5-phosphate (route I): step 1/1. Involved in the biosynthesis of the central metabolite phospho-alpha-D-ribosyl-1-pyrophosphate (PRPP) via the transfer of pyrophosphoryl group from ATP to 1-hydroxyl of ribose-5-phosphate (Rib-5-P). This chain is Ribose-phosphate pyrophosphokinase, found in Campylobacter jejuni subsp. jejuni serotype O:2 (strain ATCC 700819 / NCTC 11168).